Reading from the N-terminus, the 87-residue chain is Large ribosomal subunit protein bL31B (87 aa).

The protein belongs to the bacterial ribosomal protein bL31 family. Type B subfamily. Part of the 50S ribosomal subunit.

This chain is Large ribosomal subunit protein bL31B, found in Paraburkholderia phymatum (strain DSM 17167 / CIP 108236 / LMG 21445 / STM815) (Burkholderia phymatum).